Reading from the N-terminus, the 128-residue chain is ADA histone acetyltransferase complex component 2 (128 aa).

The protein resides in the cytoplasm. It localises to the nucleus. The sequence is that of ADA histone acetyltransferase complex component 2 (AHC2) from Saccharomyces cerevisiae (strain ATCC 204508 / S288c) (Baker's yeast).